The chain runs to 313 residues: Small ribosomal subunit protein uS2 (313 aa).

The segment at 281–301 is disordered; the sequence is AAPAAPAVEPAPEAAQEATAE.

It belongs to the universal ribosomal protein uS2 family.

The chain is Small ribosomal subunit protein uS2 from Caulobacter sp. (strain K31).